A 205-amino-acid polypeptide reads, in one-letter code: Protein TON_1965 (205 aa).

An AMMECR1 domain is found at 7–201 (EWGEFLVRLA…EEYPKGPVKR (195 aa)).

The chain is Protein TON_1965 from Thermococcus onnurineus (strain NA1).